A 401-amino-acid chain; its full sequence is Jumonji C domain-containing protein 5 (401 aa).

The region spanning 255-401 (EYLAQHELFA…PSFSVSFWWE (147 aa)) is the JmjC domain. Residues histidine 306, aspartate 308, and histidine 385 each contribute to the Fe cation site.

It depends on Fe(2+) as a cofactor. Expressed in neurons close to the dorsal lateral neurons involved in circadian rhythm.

The protein resides in the nucleus. Its subcellular location is the nucleoplasm. It is found in the cytoplasm. It carries out the reaction L-arginyl-[protein] + 2-oxoglutarate + O2 = (3R)-3-hydroxy-L-arginyl-[protein] + succinate + CO2. Functionally, bifunctional enzyme that acts both as an endopeptidase and 2-oxoglutarate-dependent monooxygenase. May be involved in regulation of behavior and circadian rhythms. The chain is Jumonji C domain-containing protein 5 from Drosophila melanogaster (Fruit fly).